A 1182-amino-acid polypeptide reads, in one-letter code: Rho GTPase-activating protein 20 (1182 aa).

A disordered region spans residues 1-40 (MEAMSPQQDALGAQPGRSSSLTGMSRIAGGPGTKKKMKTL). Serine 46 carries the post-translational modification Phosphoserine. The region spanning 86 to 187 (LLIDGPVELK…SLLQRYIALE (102 aa)) is the PH domain. The region spanning 194–283 (KSIPLKIFAK…TALLTQGSKD (90 aa)) is the Ras-associating domain. One can recognise a Rho-GAP domain in the interval 365 to 551 (VSLPDICEND…FLIENCCRIF (187 aa)). Residues serine 704 and serine 730 each carry the phosphoserine modification. Disordered regions lie at residues 744–791 (KQTQ…IQET), 932–953 (ASYS…SSQD), 981–1009 (QRKQ…GQAS), and 1140–1182 (EESG…GDRH). Positions 757 to 775 (FKQSSVTGTDVSKRNTANE) are enriched in polar residues. The segment covering 933 to 953 (SYSSLSSPGTSPSGSSVSSQD) has biased composition (low complexity).

Highest expression is found in testis. Ubiquitously expressed in extragonadal tissues.

Functionally, GTPase activator for the Rho-type GTPases by converting them to an inactive GDP-bound state. This chain is Rho GTPase-activating protein 20 (Arhgap20), found in Rattus norvegicus (Rat).